The primary structure comprises 246 residues: Probable transcriptional regulatory protein Dshi_2762 (246 aa).

The protein belongs to the TACO1 family.

It is found in the cytoplasm. The polypeptide is Probable transcriptional regulatory protein Dshi_2762 (Dinoroseobacter shibae (strain DSM 16493 / NCIMB 14021 / DFL 12)).